Reading from the N-terminus, the 132-residue chain is Aspartate 1-decarboxylase (132 aa).

Catalysis depends on Ser25, which acts as the Schiff-base intermediate with substrate; via pyruvic acid. At Ser25 the chain carries Pyruvic acid (Ser). Thr57 is a binding site for substrate. Residue Tyr58 is the Proton donor of the active site. A substrate-binding site is contributed by 73–75; the sequence is GAA.

The protein belongs to the PanD family. Heterooctamer of four alpha and four beta subunits. Requires pyruvate as cofactor. Is synthesized initially as an inactive proenzyme, which is activated by self-cleavage at a specific serine bond to produce a beta-subunit with a hydroxyl group at its C-terminus and an alpha-subunit with a pyruvoyl group at its N-terminus.

It localises to the cytoplasm. It catalyses the reaction L-aspartate + H(+) = beta-alanine + CO2. It functions in the pathway cofactor biosynthesis; (R)-pantothenate biosynthesis; beta-alanine from L-aspartate: step 1/1. Catalyzes the pyruvoyl-dependent decarboxylation of aspartate to produce beta-alanine. The polypeptide is Aspartate 1-decarboxylase (Geotalea uraniireducens (strain Rf4) (Geobacter uraniireducens)).